The primary structure comprises 89 residues: Cell division protein FtsB (89 aa).

Residues 1-3 (MRP) are Cytoplasmic-facing. Residues 4–21 (IIAILIALFILLQYQLWF) form a helical membrane-spanning segment. At 22-89 (AAGGIVSVHH…KNEVFYQIVK (68 aa)) the chain is on the periplasmic side. A coiled-coil region spans residues 29 to 62 (VHHLNENINHQIMENQKLKDRNTALLADIDDLKH).

Belongs to the FtsB family. Part of a complex composed of FtsB, FtsL and FtsQ.

The protein resides in the cell inner membrane. Functionally, essential cell division protein. May link together the upstream cell division proteins, which are predominantly cytoplasmic, with the downstream cell division proteins, which are predominantly periplasmic. The polypeptide is Cell division protein FtsB (Coxiella burnetii (strain RSA 493 / Nine Mile phase I)).